The primary structure comprises 319 residues: Large ribosomal subunit protein uL10 (319 aa).

Residues 286–319 are disordered; sequence AGDSGASAAPKEEEKAAEPEEESDEEMGFSLFDD. Residues 304-319 are compositionally biased toward acidic residues; sequence PEEESDEEMGFSLFDD.

Belongs to the universal ribosomal protein uL10 family. In terms of assembly, P0 forms a pentameric complex by interaction with dimers of P1 and P2. In terms of processing, phosphorylated.

Functionally, ribosomal protein P0 is the functional equivalent of E.coli protein L10. In Zea mays (Maize), this protein is Large ribosomal subunit protein uL10 (RP-P0).